A 331-amino-acid polypeptide reads, in one-letter code: Fructose-1,6-bisphosphatase class 1 (331 aa).

The Mg(2+) site is built by Glu-80, Asp-98, Leu-100, and Asp-101. Residues 101 to 104 (DGSS) and Asn-189 each bind substrate. Glu-261 lines the Mg(2+) pocket.

The protein belongs to the FBPase class 1 family. In terms of assembly, homotetramer. It depends on Mg(2+) as a cofactor.

It localises to the cytoplasm. It carries out the reaction beta-D-fructose 1,6-bisphosphate + H2O = beta-D-fructose 6-phosphate + phosphate. It functions in the pathway carbohydrate biosynthesis; gluconeogenesis. The polypeptide is Fructose-1,6-bisphosphatase class 1 (Rhodobacter capsulatus (strain ATCC BAA-309 / NBRC 16581 / SB1003)).